The sequence spans 177 residues: Ribosome maturation factor RimP (177 aa).

Belongs to the RimP family.

The protein resides in the cytoplasm. In terms of biological role, required for maturation of 30S ribosomal subunits. This is Ribosome maturation factor RimP from Mycobacterium marinum (strain ATCC BAA-535 / M).